The chain runs to 369 residues: Endophilin-A (369 aa).

The BAR domain maps to 18–248; that stretch reads TEKMGGAEGT…LQEKRAEAES (231 aa). A coiled-coil region spans residues 227–249; that stretch reads QCADVLRGLQETLQEKRAEAESR. The span at 275–294 shows a compositional bias: low complexity; that stretch reads GTPSHISSSASPLPSPMRSP. The disordered stretch occupies residues 275–297; that stretch reads GTPSHISSSASPLPSPMRSPAKS. The 60-residue stretch at 305–364 folds into the SH3 domain; it reads QQQPCCQALYDFDPENPGELGFKENDIITLLNRVDDNWYEGAVNGRTGYFPQSYVQVQVP.

This sequence belongs to the endophilin family.

The protein resides in the cytoplasm. It localises to the membrane. Its function is as follows. Required presynaptically at the neuromuscular junction. Implicated in synaptic vesicle endocytosis. This chain is Endophilin-A, found in Drosophila virilis (Fruit fly).